The sequence spans 128 residues: UPF0325 protein NT01EI_0832 (128 aa).

The protein belongs to the UPF0325 family.

This is UPF0325 protein NT01EI_0832 from Edwardsiella ictaluri (strain 93-146).